The chain runs to 225 residues: Lipoprotein-releasing system ATP-binding protein LolD (225 aa).

The ABC transporter domain occupies 5–225; the sequence is LEVMDLTKGY…RLVDGRVVAD (221 aa). Position 41 to 48 (41 to 48) interacts with ATP; it reads GASGTGKS.

This sequence belongs to the ABC transporter superfamily. Lipoprotein translocase (TC 3.A.1.125) family. The complex is composed of two ATP-binding proteins (LolD) and two transmembrane proteins (LolC and LolE).

It is found in the cell inner membrane. Functionally, part of the ABC transporter complex LolCDE involved in the translocation of mature outer membrane-directed lipoproteins, from the inner membrane to the periplasmic chaperone, LolA. Responsible for the formation of the LolA-lipoprotein complex in an ATP-dependent manner. This is Lipoprotein-releasing system ATP-binding protein LolD from Geobacter metallireducens (strain ATCC 53774 / DSM 7210 / GS-15).